The primary structure comprises 433 residues: MSKIVKVIGREIIDSRGNPTVEAEVHLEGGFVGMAAAPSGASTGSREALELRDGDKSRFLGKGVLKALEAVNGPIAQALLGKDAKDQAAIDQIMIDLDGTENKSKFGANAILAVSLANAKAAAAAKGMPLYAHIAELNGTAGVYSMPLPMMNIINGGEHADNNVDIQEFMIQPVGAKTLKEAVRMGAEVFHNLAKVLKSKGYNTAVGDEGGFAPNLKSNAEALEVIAEAVAAAGYVLGKDITLAMDCAASEFYDAEKKEYNLKGEGRIFTSNEFSDYLADLTTKFPIVSIEDGLDESDWDGFAYQTKELGKKIQIVGDDLFVTNTKILKRGIDNGIANSILIKFNQIGSLTETLAAIKMAKDAGYTAVISHRSGETEDATIADLAVGTAAGQIKTGSMSRSDRVAKYNQLIRIEEALGAKAPFNGLKEVKGQA.

(2R)-2-phosphoglycerate is bound at residue Gln-167. The active-site Proton donor is Glu-209. 3 residues coordinate Mg(2+): Asp-246, Glu-291, and Asp-318. Residues Lys-343, Arg-372, Ser-373, and Lys-394 each coordinate (2R)-2-phosphoglycerate. Lys-343 acts as the Proton acceptor in catalysis.

Belongs to the enolase family. In terms of assembly, component of the RNA degradosome, a multiprotein complex involved in RNA processing and mRNA degradation. Mg(2+) is required as a cofactor.

It localises to the cytoplasm. The protein resides in the secreted. Its subcellular location is the cell surface. The catalysed reaction is (2R)-2-phosphoglycerate = phosphoenolpyruvate + H2O. It functions in the pathway carbohydrate degradation; glycolysis; pyruvate from D-glyceraldehyde 3-phosphate: step 4/5. Catalyzes the reversible conversion of 2-phosphoglycerate (2-PG) into phosphoenolpyruvate (PEP). It is essential for the degradation of carbohydrates via glycolysis. The sequence is that of Enolase from Aeromonas salmonicida (strain A449).